The chain runs to 361 residues: Phosphoserine aminotransferase (361 aa).

Arg-42 contributes to the L-glutamate binding site. Residues 76 to 77 (AT), Trp-102, Thr-152, Asp-172, and Gln-195 each bind pyridoxal 5'-phosphate. Residue Lys-196 is modified to N6-(pyridoxal phosphate)lysine. 237–238 (NT) lines the pyridoxal 5'-phosphate pocket.

The protein belongs to the class-V pyridoxal-phosphate-dependent aminotransferase family. SerC subfamily. As to quaternary structure, homodimer. The cofactor is pyridoxal 5'-phosphate.

The protein localises to the cytoplasm. It carries out the reaction O-phospho-L-serine + 2-oxoglutarate = 3-phosphooxypyruvate + L-glutamate. The enzyme catalyses 4-(phosphooxy)-L-threonine + 2-oxoglutarate = (R)-3-hydroxy-2-oxo-4-phosphooxybutanoate + L-glutamate. It participates in amino-acid biosynthesis; L-serine biosynthesis; L-serine from 3-phospho-D-glycerate: step 2/3. The protein operates within cofactor biosynthesis; pyridoxine 5'-phosphate biosynthesis; pyridoxine 5'-phosphate from D-erythrose 4-phosphate: step 3/5. Its function is as follows. Catalyzes the reversible conversion of 3-phosphohydroxypyruvate to phosphoserine and of 3-hydroxy-2-oxo-4-phosphonooxybutanoate to phosphohydroxythreonine. The protein is Phosphoserine aminotransferase of Xanthomonas campestris pv. campestris (strain 8004).